Consider the following 534-residue polypeptide: Light-independent protochlorophyllide reductase subunit B (534 aa).

Residue Asp36 coordinates [4Fe-4S] cluster. The active-site Proton donor is Asp274. 409–410 is a substrate binding site; the sequence is GL. The disordered stretch occupies residues 426–446; sequence DEAGPSHHGGKAVPASAPRAD.

This sequence belongs to the ChlB/BchB/BchZ family. In terms of assembly, protochlorophyllide reductase is composed of three subunits; BchL, BchN and BchB. Forms a heterotetramer of two BchB and two BchN subunits. Requires [4Fe-4S] cluster as cofactor.

The enzyme catalyses chlorophyllide a + oxidized 2[4Fe-4S]-[ferredoxin] + 2 ADP + 2 phosphate = protochlorophyllide a + reduced 2[4Fe-4S]-[ferredoxin] + 2 ATP + 2 H2O. Its pathway is porphyrin-containing compound metabolism; bacteriochlorophyll biosynthesis (light-independent). Functionally, component of the dark-operative protochlorophyllide reductase (DPOR) that uses Mg-ATP and reduced ferredoxin to reduce ring D of protochlorophyllide (Pchlide) to form chlorophyllide a (Chlide). This reaction is light-independent. The NB-protein (BchN-BchB) is the catalytic component of the complex. This is Light-independent protochlorophyllide reductase subunit B from Cereibacter sphaeroides (strain ATCC 17023 / DSM 158 / JCM 6121 / CCUG 31486 / LMG 2827 / NBRC 12203 / NCIMB 8253 / ATH 2.4.1.) (Rhodobacter sphaeroides).